Reading from the N-terminus, the 217-residue chain is Carboxylesterase Culp1 (217 aa).

The N-terminal stretch at 1–32 (MTPRSLVRIVGVVVATTLALVSAPAGGRAAHA) is a signal peptide. Cysteine 35 and cysteine 107 form a disulfide bridge. The active-site Nucleophile is serine 118. The cysteines at positions 177 and 184 are disulfide-linked. Aspartate 181 is a catalytic residue. The active-site Proton donor/acceptor is the histidine 193.

The protein belongs to the cutinase family.

The protein resides in the secreted. It catalyses the reaction a fatty acid ester + H2O = an aliphatic alcohol + a fatty acid + H(+). In terms of biological role, shows esterase activity, with a preference for short- and medium-chain fatty acids. The chain is Carboxylesterase Culp1 from Mycobacterium bovis (strain ATCC BAA-935 / AF2122/97).